We begin with the raw amino-acid sequence, 384 residues long: Succinyl-diaminopimelate desuccinylase (384 aa).

Position 75 (His-75) interacts with Zn(2+). Residue Asp-77 is part of the active site. Position 108 (Asp-108) interacts with Zn(2+). The active-site Proton acceptor is Glu-142. Zn(2+) is bound by residues Glu-143, Glu-171, and His-357.

Belongs to the peptidase M20A family. DapE subfamily. Homodimer. Requires Zn(2+) as cofactor. It depends on Co(2+) as a cofactor.

It catalyses the reaction N-succinyl-(2S,6S)-2,6-diaminopimelate + H2O = (2S,6S)-2,6-diaminopimelate + succinate. It functions in the pathway amino-acid biosynthesis; L-lysine biosynthesis via DAP pathway; LL-2,6-diaminopimelate from (S)-tetrahydrodipicolinate (succinylase route): step 3/3. In terms of biological role, catalyzes the hydrolysis of N-succinyl-L,L-diaminopimelic acid (SDAP), forming succinate and LL-2,6-diaminopimelate (DAP), an intermediate involved in the bacterial biosynthesis of lysine and meso-diaminopimelic acid, an essential component of bacterial cell walls. The protein is Succinyl-diaminopimelate desuccinylase of Shewanella oneidensis (strain ATCC 700550 / JCM 31522 / CIP 106686 / LMG 19005 / NCIMB 14063 / MR-1).